Reading from the N-terminus, the 277-residue chain is Probable endonuclease 4 (277 aa).

Zn(2+)-binding residues include histidine 67, histidine 107, glutamate 142, aspartate 176, histidine 179, histidine 211, aspartate 224, histidine 226, and glutamate 256.

This sequence belongs to the AP endonuclease 2 family. It depends on Zn(2+) as a cofactor.

The catalysed reaction is Endonucleolytic cleavage to 5'-phosphooligonucleotide end-products.. In terms of biological role, endonuclease IV plays a role in DNA repair. It cleaves phosphodiester bonds at apurinic or apyrimidinic (AP) sites, generating a 3'-hydroxyl group and a 5'-terminal sugar phosphate. The chain is Probable endonuclease 4 from Clostridium beijerinckii (strain ATCC 51743 / NCIMB 8052) (Clostridium acetobutylicum).